Consider the following 311-residue polypeptide: Aspartate carbamoyltransferase catalytic subunit (311 aa).

Carbamoyl phosphate is bound by residues Arg-55 and Thr-56. Lys-85 is a binding site for L-aspartate. Positions 106, 135, and 138 each coordinate carbamoyl phosphate. L-aspartate-binding residues include Arg-168 and Arg-230. Carbamoyl phosphate contacts are provided by Leu-268 and Pro-269.

The protein belongs to the aspartate/ornithine carbamoyltransferase superfamily. ATCase family. In terms of assembly, heterododecamer (2C3:3R2) of six catalytic PyrB chains organized as two trimers (C3), and six regulatory PyrI chains organized as three dimers (R2).

It carries out the reaction carbamoyl phosphate + L-aspartate = N-carbamoyl-L-aspartate + phosphate + H(+). It participates in pyrimidine metabolism; UMP biosynthesis via de novo pathway; (S)-dihydroorotate from bicarbonate: step 2/3. Its function is as follows. Catalyzes the condensation of carbamoyl phosphate and aspartate to form carbamoyl aspartate and inorganic phosphate, the committed step in the de novo pyrimidine nucleotide biosynthesis pathway. This chain is Aspartate carbamoyltransferase catalytic subunit, found in Escherichia fergusonii (strain ATCC 35469 / DSM 13698 / CCUG 18766 / IAM 14443 / JCM 21226 / LMG 7866 / NBRC 102419 / NCTC 12128 / CDC 0568-73).